The following is a 96-amino-acid chain: Large ribosomal subunit protein eL14 (96 aa).

The protein belongs to the eukaryotic ribosomal protein eL14 family.

The sequence is that of Large ribosomal subunit protein eL14 from Saccharolobus islandicus (strain M.14.25 / Kamchatka #1) (Sulfolobus islandicus).